The following is a 359-amino-acid chain: Putative ankyrin repeat protein R190 (359 aa).

ANK repeat units follow at residues 72–103 (RLME…DFRC), 105–133 (DCVI…DLNR), 142–173 (DEII…SISI), 203–234 (LGNL…DINN), 236–260 (HEYS…YGLI), 261–287 (IHDD…IGHK), and 288–317 (PSKQ…DLSD).

This is Putative ankyrin repeat protein R190 from Acanthamoeba polyphaga (Amoeba).